Consider the following 713-residue polypeptide: Histone-lysine N-methyltransferase SETDB2 (713 aa).

Positions 78–109 (PEVNTHRSNHTPVTQSEQENKSSAVPSASCDN) are disordered. Positions 87–109 (HTPVTQSEQENKSSAVPSASCDN) are enriched in polar residues. The MBD domain maps to 161 to 233 (LSLKGENPLQ…DNFSFNTYVQ (73 aa)). The Pre-SET domain maps to 294–367 (DSCDCSEGCI…MCQNRVIQHG (74 aa)). Zn(2+) contacts are provided by cysteine 296, cysteine 298, cysteine 302, cysteine 308, cysteine 310, cysteine 348, cysteine 352, cysteine 354, and cysteine 359. The SET domain maps to 370–688 (VRLQVFKSEK…ARTELTWDYG (319 aa)). Position 380–382 (380–382 (KGW)) interacts with S-adenosyl-L-methionine. Composition is skewed to basic and acidic residues over residues 511 to 534 (EDKNGFKPAQEHVNSEARRAHEDL) and 579 to 592 (TKQVLEVPGKKSQE). Disordered regions lie at residues 511–549 (EDKNGFKPAQEHVNSEARRAHEDLSSNPAGDSEDTQLTE) and 579–608 (TKQVLEVPGKKSQEEEPAASQSQQALCDEE). Residues arginine 642 and 645-646 (NH) contribute to the S-adenosyl-L-methionine site. The Zn(2+) site is built by cysteine 648, cysteine 701, cysteine 703, and cysteine 708.

It belongs to the class V-like SAM-binding methyltransferase superfamily.

It localises to the nucleus. The protein resides in the chromosome. It carries out the reaction N(6),N(6)-dimethyl-L-lysyl(9)-[histone H3] + S-adenosyl-L-methionine = N(6),N(6),N(6)-trimethyl-L-lysyl(9)-[histone H3] + S-adenosyl-L-homocysteine + H(+). Functionally, histone methyltransferase involved in left-right axis specification in early development and mitosis. Specifically trimethylates 'Lys-9' of histone H3 (H3K9me3). H3K9me3 is a specific tag for epigenetic transcriptional repression that recruits HP1 (CBX1, CBX3 and/or CBX5) proteins to methylated histones. Contributes to H3K9me3 in both the interspersed repetitive elements and centromere-associated repeats. Plays a role in chromosome condensation and segregation during mitosis. This chain is Histone-lysine N-methyltransferase SETDB2 (Setdb2), found in Mus musculus (Mouse).